The primary structure comprises 289 residues: ATP synthase gamma chain (289 aa).

The protein belongs to the ATPase gamma chain family. In terms of assembly, F-type ATPases have 2 components, CF(1) - the catalytic core - and CF(0) - the membrane proton channel. CF(1) has five subunits: alpha(3), beta(3), gamma(1), delta(1), epsilon(1). CF(0) has three main subunits: a, b and c.

It is found in the cell membrane. Its function is as follows. Produces ATP from ADP in the presence of a proton gradient across the membrane. The gamma chain is believed to be important in regulating ATPase activity and the flow of protons through the CF(0) complex. In Lactococcus lactis subsp. cremoris (strain MG1363), this protein is ATP synthase gamma chain.